Reading from the N-terminus, the 322-residue chain is MIWLEENMIKITFCFFKVIFILLLIVFSSAMLSIVERRLLAVFQNRYGPNRVGWMGSLQLCADMIKILFKEDWIPPFSRKFIFVLSPVIAFTSLLCVIPIIPFTSHFVIIDLNIGILFFLMMASLSVYAILFAGWSSNNKYALLGAMRACVQTLSYEVFLGLSLMGVVAQSGSFKISDIVNSQKYIWNVFPQFFGFLTFLIAGLAVCHRHPFDQPESEQELADGYHIEYSGMKFGLFFIGEYISIITVSSLIVTLFFGGWLGPWIPGCIWFILKIIFFIFLFILIRAALPRPRYDQVLLFGWKFCLPLTLFNLFLTAFLILV.

9 helical membrane passes run 15–35, 50–69, 81–101, 114–134, 149–169, 186–206, 237–257, 265–285, and 302–322; these read FFKV…LSIV, NRVG…KILF, FIFV…IPII, IGIL…LFAG, ACVQ…GVVA, IWNV…GLAV, FFIG…TLFF, IPGC…FILI, and WKFC…LILV.

The protein belongs to the complex I subunit 1 family. In terms of assembly, NDH-1 is composed of 13 different subunits. Subunits NuoA, H, J, K, L, M, N constitute the membrane sector of the complex.

It is found in the cell membrane. It carries out the reaction a quinone + NADH + 5 H(+)(in) = a quinol + NAD(+) + 4 H(+)(out). NDH-1 shuttles electrons from NADH, via FMN and iron-sulfur (Fe-S) centers, to quinones in the respiratory chain. The immediate electron acceptor for the enzyme in this species is believed to be ubiquinone. Couples the redox reaction to proton translocation (for every two electrons transferred, four hydrogen ions are translocated across the cytoplasmic membrane), and thus conserves the redox energy in a proton gradient. This subunit may bind ubiquinone. This chain is NADH-quinone oxidoreductase subunit H, found in Buchnera aphidicola subsp. Acyrthosiphon pisum (strain 5A).